A 683-amino-acid polypeptide reads, in one-letter code: Outer dynein arm-docking complex subunit 4 (683 aa).

TPR repeat units follow at residues 13–46 (FPSY…QSGD), 47–80 (KNCL…DPTF), 48–80 (NCLV…DPTF), and 81–114 (CKGI…RPDR). Positions 158-179 (QQKPHPVRQLIHHPKRESKRKG) are disordered. The segment covering 167–179 (LIHHPKRESKRKG) has biased composition (basic residues). 5 TPR repeats span residues 275–311 (LKSL…NKEE), 320–353 (GNLY…AKEY), 360–393 (SRAL…AKTT), 397–430 (TWLF…AEEE), and 437–470 (LNAS…AKLV). 2 disordered regions span residues 510–537 (ENAT…PEKV) and 553–683 (VLSK…EPIE). 4 stretches are compositionally biased toward basic and acidic residues: residues 521–537 (TAKE…PEKV), 566–590 (PEQR…ERGP), 602–620 (GRTE…RPSE), and 629–675 (SSPR…IEKD). One copy of the TPR 15 repeat lies at 592–625 (DTAKGQFGEAGRTEQNREETREIYRRPSELDQNL).

In terms of assembly, component of the outer dynein arm-docking complex along with ODAD1, ODAD2 and ODAD3. Interacts with ODAD1; this interaction may facilitate the recruitment and/or attachment of outer dynein arm docking complex proteins, including ODAD1, ODAD3 and ODAD2, to ciliary axonemes. Interacts with components of the IFT complex A, including IFT140, TTC21B/IFT139 and WDR19/IFT144, and the IFT complex B, including IFT46, IFT52 and IFT57. Interacts with CFAP53. Expressed in trachea multiciliated cells.

It is found in the cytoplasm. The protein resides in the cytoskeleton. It localises to the cilium axoneme. In terms of biological role, component of the outer dynein arm-docking complex (ODA-DC) that mediates outer dynein arms (ODA) binding onto the doublet microtubule. Plays an essential role for the assembly of ODA-DC and for the docking of ODA in ciliary axoneme. This is Outer dynein arm-docking complex subunit 4 from Bos taurus (Bovine).